The chain runs to 333 residues: Ketol-acid reductoisomerase (NADP(+)) (333 aa).

Positions 1-179 (MFYDDDADLS…GGTRAGVIKT (179 aa)) constitute a KARI N-terminal Rossmann domain. NADP(+) contacts are provided by residues 22–25 (YGSQ), Lys45, Ser48, Ser50, and 80–83 (DTAQ). His105 is a catalytic residue. Gly131 is a binding site for NADP(+). Residues 180-325 (TFKDETETDL…KKLRDLMSWV (146 aa)) enclose the KARI C-terminal knotted domain. 4 residues coordinate Mg(2+): Asp188, Glu192, Glu224, and Glu228. Ser249 contacts substrate.

Belongs to the ketol-acid reductoisomerase family. Mg(2+) serves as cofactor.

The enzyme catalyses (2R)-2,3-dihydroxy-3-methylbutanoate + NADP(+) = (2S)-2-acetolactate + NADPH + H(+). The catalysed reaction is (2R,3R)-2,3-dihydroxy-3-methylpentanoate + NADP(+) = (S)-2-ethyl-2-hydroxy-3-oxobutanoate + NADPH + H(+). It participates in amino-acid biosynthesis; L-isoleucine biosynthesis; L-isoleucine from 2-oxobutanoate: step 2/4. The protein operates within amino-acid biosynthesis; L-valine biosynthesis; L-valine from pyruvate: step 2/4. Its function is as follows. Involved in the biosynthesis of branched-chain amino acids (BCAA). Catalyzes an alkyl-migration followed by a ketol-acid reduction of (S)-2-acetolactate (S2AL) to yield (R)-2,3-dihydroxy-isovalerate. In the isomerase reaction, S2AL is rearranged via a Mg-dependent methyl migration to produce 3-hydroxy-3-methyl-2-ketobutyrate (HMKB). In the reductase reaction, this 2-ketoacid undergoes a metal-dependent reduction by NADPH to yield (R)-2,3-dihydroxy-isovalerate. The protein is Ketol-acid reductoisomerase (NADP(+)) of Mycobacterium ulcerans (strain Agy99).